Here is a 215-residue protein sequence, read N- to C-terminus: Secretory component protein psh3 (215 aa).

Over 1–21 (MAKRSIFRFADEKGLKVAARY) the chain is Cytoplasmic. A helical transmembrane segment spans residues 22–42 (GVLMSTSFIFALLFHSSVADV). Residues 43–67 (NTLWSPGPESAFDAAETYYTLVAGS) lie on the Extracellular side of the membrane. Residues 68–88 (HFIVKYTVYTIMGLNMIFHLI) form a helical membrane-spanning segment. Residues 89–105 (QATGAKGDDKLFFYSST) are Cytoplasmic-facing. Residues 106-126 (LLYLTALILFIVNVAPSMLVV) traverse the membrane as a helical segment. The Extracellular segment spans residues 127–147 (KLQNYVQFPRNMHLSVLAASH). The chain crosses the membrane as a helical span at residues 148-168 (VLVEFLLAGVILIQLGYVFGY). The Cytoplasmic portion of the chain corresponds to 169 to 215 (HVQSIQQREYAEDMREQELAEKAKLESESATTQSVETVSTESVSKRK). Positions 190–215 (KAKLESESATTQSVETVSTESVSKRK) are disordered. Residues 196–215 (ESATTQSVETVSTESVSKRK) show a composition bias toward low complexity.

It to yeast SHR3. Monomer.

The protein localises to the endoplasmic reticulum membrane. Its function is as follows. Involved in amino acid permease processing and required for the efficient translocation of structurally related amino acid permeases from the endoplasmic reticulum to the plasma membrane. The chain is Secretory component protein psh3 (psh3) from Schizosaccharomyces pombe (strain 972 / ATCC 24843) (Fission yeast).